The chain runs to 139 residues: MWKAVMNAWNGTESQSKNVSNIQSYSFEDMKRIVGKHDPNVVLVDVREPSEYSIVHIPASINVPYRSHPDAFALDPLEFEKQIGIPKPDSAKELIFYCASGKRGGEAQKVASSHGYSNTSLYPGSMNDWVSHGGDKLDL.

Phosphoserine is present on Ser-26. Residues 37–138 form the Rhodanese domain; that stretch reads HDPNVVLVDV…WVSHGGDKLD (102 aa). The Cysteine persulfide intermediate role is filled by Cys-98.

The protein localises to the mitochondrion. It catalyses the reaction thiosulfate + glutathione = S-sulfanylglutathione + sulfite + H(+). With respect to regulation, GSS(-) is a potent inhibitor of RDL1, since the presence of the sulfur dioxygenase strongly increases the RDL1 catalytic activity. Functionally, thiosulfate:glutathione sulfurtransferase (TST) required to produce S-sulfanylglutathione (GSS(-)), a central intermediate in hydrogen sulfide metabolism. Provides the link between the first step in H(2)S metabolism performed by the sulfide:quinone oxidoreductase (SQOR) which catalyzes the conversion of H(2)S to thiosulfate, and the sulfur dioxygenase (SDO) which uses GSS(-) as substrate. The thermodynamic coupling of the irreversible SDO and reversible TST reactions provides a model for the physiologically relevant reaction with thiosulfate as the sulfane donor. The sequence is that of Thiosulfate:glutathione sulfurtransferase (RDL1) from Saccharomyces cerevisiae (strain ATCC 204508 / S288c) (Baker's yeast).